We begin with the raw amino-acid sequence, 566 residues long: Oxygen-dependent choline dehydrogenase (566 aa).

7 to 36 (DYIICGAGSAGNVLATRLTEDPDVTVLLLE) serves as a coordination point for FAD. The segment at 180–202 (NGYQQEGFGPMDRTVTPKGRRAS) is disordered. Residue histidine 474 is the Proton acceptor of the active site.

Belongs to the GMC oxidoreductase family. FAD serves as cofactor.

The enzyme catalyses choline + A = betaine aldehyde + AH2. It catalyses the reaction betaine aldehyde + NAD(+) + H2O = glycine betaine + NADH + 2 H(+). The protein operates within amine and polyamine biosynthesis; betaine biosynthesis via choline pathway; betaine aldehyde from choline (cytochrome c reductase route): step 1/1. In terms of biological role, involved in the biosynthesis of the osmoprotectant glycine betaine. Catalyzes the oxidation of choline to betaine aldehyde and betaine aldehyde to glycine betaine at the same rate. The sequence is that of Oxygen-dependent choline dehydrogenase from Burkholderia lata (strain ATCC 17760 / DSM 23089 / LMG 22485 / NCIMB 9086 / R18194 / 383).